The primary structure comprises 968 residues: RNA polymerase-associated protein RapA (968 aa).

A Helicase ATP-binding domain is found at 164–334 (DVGRRHAPRV…FARLRLLDPN (171 aa)). An ATP-binding site is contributed by 177 to 184 (DEVGLGKT). The short motif at 280 to 283 (DEAH) is the DEAH box element. In terms of domain architecture, Helicase C-terminal spans 490–662 (RVEWLMGYLT…YLASPDQTEG (173 aa)).

Belongs to the SNF2/RAD54 helicase family. RapA subfamily. In terms of assembly, interacts with the RNAP. Has a higher affinity for the core RNAP than for the holoenzyme. Its ATPase activity is stimulated by binding to RNAP.

Transcription regulator that activates transcription by stimulating RNA polymerase (RNAP) recycling in case of stress conditions such as supercoiled DNA or high salt concentrations. Probably acts by releasing the RNAP, when it is trapped or immobilized on tightly supercoiled DNA. Does not activate transcription on linear DNA. Probably not involved in DNA repair. The chain is RNA polymerase-associated protein RapA from Shigella flexneri serotype 5b (strain 8401).